The primary structure comprises 204 residues: Outer-membrane lipoprotein LolB (204 aa).

The signal sequence occupies residues methionine 1–glycine 16. Cysteine 17 carries the N-palmitoyl cysteine lipid modification. Residue cysteine 17 is the site of S-diacylglycerol cysteine attachment.

This sequence belongs to the LolB family. In terms of assembly, monomer.

Its subcellular location is the cell outer membrane. In terms of biological role, plays a critical role in the incorporation of lipoproteins in the outer membrane after they are released by the LolA protein. This Ectopseudomonas mendocina (strain ymp) (Pseudomonas mendocina) protein is Outer-membrane lipoprotein LolB.